Here is a 137-residue protein sequence, read N- to C-terminus: Large ribosomal subunit protein uL16 (137 aa).

This sequence belongs to the universal ribosomal protein uL16 family. Part of the 50S ribosomal subunit.

Binds 23S rRNA and is also seen to make contacts with the A and possibly P site tRNAs. The protein is Large ribosomal subunit protein uL16 of Bartonella tribocorum (strain CIP 105476 / IBS 506).